Here is a 198-residue protein sequence, read N- to C-terminus: Nucleoid occlusion factor SlmA (198 aa).

The 62-residue stretch at 9–70 (RNRREEILQA…SLIEFIEDSL (62 aa)) folds into the HTH tetR-type domain. A DNA-binding region (H-T-H motif) is located at residues 33-52 (TTAKLAANVGVSEAALYRHF). Residues 119–144 (DRLQGRINQLYERIEVQLRQVLRERK) are a coiled coil.

It belongs to the nucleoid occlusion factor SlmA family. As to quaternary structure, homodimer. Interacts with FtsZ.

It localises to the cytoplasm. Its subcellular location is the nucleoid. In terms of biological role, required for nucleoid occlusion (NO) phenomenon, which prevents Z-ring formation and cell division over the nucleoid. Acts as a DNA-associated cell division inhibitor that binds simultaneously chromosomal DNA and FtsZ, and disrupts the assembly of FtsZ polymers. SlmA-DNA-binding sequences (SBS) are dispersed on non-Ter regions of the chromosome, preventing FtsZ polymerization at these regions. The chain is Nucleoid occlusion factor SlmA from Sodalis glossinidius (strain morsitans).